The chain runs to 576 residues: Cilia- and flagella-associated protein 100 (576 aa).

The segment at 1 to 29 (MPIYDEASVPGTAAGRSTTDVGATAGANP) is disordered. 3 coiled-coil regions span residues 125–226 (IFLL…CRRY), 254–311 (VAEW…IMKE), and 342–408 (YKQL…LKDR). 3 disordered regions span residues 417-439 (TLSMGSSNAPTSSVTGSSGPGGP), 495-519 (AEKAREKDRRKVARDEKLSTQHREH), and 538-563 (TGKPLMFRSAPPQRKKVVQADDRNDE).

Belongs to the CFAP100 family. Interacts with FAP73; form the modifier of inner arm (MIA) complex.

It localises to the cytoplasm. It is found in the cytoskeleton. Its subcellular location is the flagellum axoneme. Its function is as follows. As part of MIA, a complex associated with the outer doublet microtubules of the axoneme, may play a role in ciliary/flagellar motility by regulating the assembly and the activity of axonemal inner dynein arm. The sequence is that of Cilia- and flagella-associated protein 100 from Chlamydomonas reinhardtii (Chlamydomonas smithii).